An 823-amino-acid polypeptide reads, in one-letter code: Apoptosis-resistant E3 ubiquitin protein ligase 1 (823 aa).

Residues 52–158 (GNYLDPRSCK…VAYSPYYKIF (107 aa)) form a Filamin repeat. Residues 315 to 345 (PPMHMTSSQRRPSTAVDEEDEDSPSECHTPE) are disordered. The segment at 483-789 (SISDWSKNFE…THSTLPTAHT (307 aa)) is interaction with SOCS2. The 341-residue stretch at 483–823 (SISDWSKNFE…SEGCEGFGML (341 aa)) folds into the HECT domain. C790 acts as the Glycyl thioester intermediate in catalysis.

As to quaternary structure, interacts with SOCS2. Interacts (via HECT domain) with HTRA2, DIABLO/SMAC and SEPTIN4; in the cytoplasm following induction of apoptosis. Post-translationally, autoubiquitinated in vitro in the presence of E2 enzyme UBE2D1/UBCH5A.

It catalyses the reaction S-ubiquitinyl-[E2 ubiquitin-conjugating enzyme]-L-cysteine + [acceptor protein]-L-lysine = [E2 ubiquitin-conjugating enzyme]-L-cysteine + N(6)-ubiquitinyl-[acceptor protein]-L-lysine.. It functions in the pathway protein modification; protein ubiquitination. Functionally, E3 ubiquitin-protein ligase that catalyzes 'Lys-11'- or 'Lys-33'-linked polyubiquitin chains, with some preference for 'Lys-33' linkages. E3 ubiquitin-protein ligases accept ubiquitin from an E2 ubiquitin-conjugating enzyme in the form of a thioester and then directly transfers the ubiquitin to targeted substrates. Ubiquitinates SEPTIN4, DIABLO/SMAC and HTRA2 in vitro. Modulates pulmonary inflammation by targeting SOCS2 for ubiquitination and subsequent degradation by the proteasome. In Homo sapiens (Human), this protein is Apoptosis-resistant E3 ubiquitin protein ligase 1.